A 411-amino-acid chain; its full sequence is Putative BMP-2-inducible kinase-like protein (411 aa).

3 disordered regions span residues 1–87 (MIAP…TQDI), 215–280 (SQQQ…RVSQ), and 392–411 (QQSQ…PSKQ). Composition is skewed to basic and acidic residues over residues 8–18 (SSEEEGQKDEE) and 53–68 (EKRS…KAKY). Positions 47 to 71 (EDEEEEEKRSSDSDYEQAKAKYSDM) form a coiled coil. 2 stretches are compositionally biased toward basic residues: residues 220–234 (VKQR…RQRR) and 243–258 (NGKR…KKTL).

The chain is Putative BMP-2-inducible kinase-like protein (BMP2KL) from Homo sapiens (Human).